The chain runs to 112 residues: Divalent-cation tolerance protein CutA (112 aa).

The Cu cation site is built by cysteine 16, histidine 83, and histidine 84.

Belongs to the CutA family. Homotrimer. The cofactor is Cu cation.

It is found in the cytoplasm. Involved in resistance toward heavy metals. The chain is Divalent-cation tolerance protein CutA from Shigella boydii serotype 18 (strain CDC 3083-94 / BS512).